Consider the following 346-residue polypeptide: MARPQRTPARSPDSIVEVKSKFDAEFRRFALPRASVSGFQEFSRLLRAVHQIPGLDVLLGYTDAHGDLLPLTNDDSLHRALASGPPPLRLLVQKRAEADSSGLAFASNSLQRRKKGLLLRPVAPLRTRPPLLISLPQDFRQVSSVIDVDLLPETHRRVRLHKHGSDRPLGFYIRDGMSVRVAPQGLERVPGIFISRLVRGGLAESTGLLAVSDEILEVNGIEVAGKTLDQVTDMMVANSHNLIVTVKPANQRNNVVRGASGRLTGPPSAGPGPAEPDSDDDSSDLVIENRQPPSSNGLSQGPPCWDLHPGCRHPGTRSSLPSLDDQEQASSGWGSRIRGDGSGFSL.

Positions 1–116 (MARPQRTPAR…SNSLQRRKKG (116 aa)) are interaction with PRKCI and PRKCZ. A PB1 domain is found at 15–95 (IVEVKSKFDA…PPLRLLVQKR (81 aa)). The interval 126-253 (RTRPPLLISL…VTVKPANQRN (128 aa)) is interaction with PARD3 and CDC42. A Pseudo-CRIB domain is found at 133-150 (ISLPQDFRQVSSVIDVDL). The 94-residue stretch at 157–250 (RVRLHKHGSD…NLIVTVKPAN (94 aa)) folds into the PDZ domain. The segment at 257 to 346 (RGASGRLTGP…IRGDGSGFSL (90 aa)) is disordered. Serine 278 and serine 345 each carry phosphoserine.

It belongs to the PAR6 family. Interacts with MAP2K5. Interacts with PARD3. Interacts with GTP-bound forms of CDC42, RHOQ/TC10 and RAC1. Interacts with the N-terminal part of PRKCI and PRKCZ. Part of a complex with PARD3, CDC42 or RAC1 and PRKCI or PRKCZ. Part of a complex with LLGL1 and PRKCI. Interacts with human T-cell leukemia virus type I TAX protein. Interacts with PALS1 and CRB3. Interacts with TGFBR1; involved in TGF-beta induced epithelial to mesenchymal transition. Interacts with ECT2 ('Thr-359' phosphorylated form) and PRKCI. Interacts with DCTN1 and PCM1. Post-translationally, phosphorylated by the TGF-beta receptor. In terms of processing, ubiquitinated by the SCF(FBXO31) complex, leading to its proteasomal degradation. Expressed in pancreas, skeletal muscle, brain and heart. Weakly expressed in kidney and placenta.

Its subcellular location is the cytoplasm. The protein resides in the cell membrane. It localises to the cell projection. It is found in the ruffle. The protein localises to the cell junction. Its subcellular location is the tight junction. The protein resides in the cytoskeleton. It localises to the microtubule organizing center. It is found in the centrosome. The protein localises to the centriolar satellite. Functionally, adapter protein involved in asymmetrical cell division and cell polarization processes. Probably involved in the formation of epithelial tight junctions. Association with PARD3 may prevent the interaction of PARD3 with F11R/JAM1, thereby preventing tight junction assembly. The PARD6-PARD3 complex links GTP-bound Rho small GTPases to atypical protein kinase C proteins. Regulates centrosome organization and function. Essential for the centrosomal recruitment of key proteins that control centrosomal microtubule organization. This chain is Partitioning defective 6 homolog alpha (PARD6A), found in Homo sapiens (Human).